The primary structure comprises 56 residues: Large ribosomal subunit protein bL33 (56 aa).

The protein belongs to the bacterial ribosomal protein bL33 family.

The chain is Large ribosomal subunit protein bL33 from Glaesserella parasuis serovar 5 (strain SH0165) (Haemophilus parasuis).